Consider the following 113-residue polypeptide: Large ribosomal subunit protein uL22 (113 aa).

The protein belongs to the universal ribosomal protein uL22 family. In terms of assembly, part of the 50S ribosomal subunit.

Its function is as follows. This protein binds specifically to 23S rRNA; its binding is stimulated by other ribosomal proteins, e.g. L4, L17, and L20. It is important during the early stages of 50S assembly. It makes multiple contacts with different domains of the 23S rRNA in the assembled 50S subunit and ribosome. Functionally, the globular domain of the protein is located near the polypeptide exit tunnel on the outside of the subunit, while an extended beta-hairpin is found that lines the wall of the exit tunnel in the center of the 70S ribosome. The polypeptide is Large ribosomal subunit protein uL22 (Trichlorobacter lovleyi (strain ATCC BAA-1151 / DSM 17278 / SZ) (Geobacter lovleyi)).